Consider the following 585-residue polypeptide: Frizzled-5 (585 aa).

The first 26 residues, 1–26 (MARPDPSAPPSLLLLLLAQLVGRAAA), serve as a signal peptide directing secretion. Residues 27–238 (ASKAPVCQEI…PDERTFATFW (212 aa)) lie on the Extracellular side of the membrane. The FZ domain maps to 28-150 (SKAPVCQEIT…GDAEVLCMDY (123 aa)). Cystine bridges form between C33–C94, C41–C87, C78–C116, C105–C147, and C109–C133. N-linked (GlcNAc...) asparagine glycosylation is present at N47. An N-linked (GlcNAc...) asparagine glycan is attached at N151. The disordered stretch occupies residues 156–182 (TTASPKSFPAKPTLPGPPGAPSSGGEC). A helical transmembrane segment spans residues 239–259 (IGLWSVLCFISTSTTVATFLI). The Cytoplasmic portion of the chain corresponds to 260-270 (DMERFRYPERP). A helical transmembrane segment spans residues 271–291 (IIFLSACYLCVSLGFLVRLVV). Over 292-315 (GHASVACSREHSHIHYETTGPALC) the chain is Extracellular. The helical transmembrane segment at 316-336 (TVVFLLVYFFGMASSIWWVIL) threads the bilayer. The Cytoplasmic portion of the chain corresponds to 337 to 358 (SLTWFLAAGMKWGNEAIAGYAQ). Residues 359 to 379 (YFHLAAWLIPSVKSITALALS) traverse the membrane as a helical segment. The Extracellular portion of the chain corresponds to 380–402 (SVDGDPVAGICYVGNQNLNSLRG). A helical membrane pass occupies residues 403–423 (FVLGPLVLYLLVGTLFLLAGF). Topologically, residues 424-449 (VSLFRIRSVIKQGGTKTDKLEKLMIR) are cytoplasmic. Residues 450-470 (IGIFTLLYTVPASIVVACYLY) traverse the membrane as a helical segment. At 471–500 (EQHYRESWEAALTCACPGPDAGQPRAKPEY) the chain is on the extracellular side. The chain crosses the membrane as a helical span at residues 501-521 (WVLMLKYFMCLVVGITSGVWI). At 522 to 585 (WSGKTLESWR…YHKQVSLSHV (64 aa)) the chain is on the cytoplasmic side. The PDZ-binding motif lies at 582–584 (LSH).

The protein belongs to the G-protein coupled receptor Fz/Smo family. In terms of assembly, binding of unsaturated fatty acid molecules (via FZ domain) promotes homodimerization (via FZ domain). Interacts with WNT2B. Interacts with WNT7A. Interacts with GOPC. Ubiquitinated by RNF43 and ZNRF3, leading to its degradation by the proteasome. Detected in hippocampus (at protein level). Expressed in eye, kidney, lung, chondrocytes, epithelial cells of the small intestine and gobelet cells of the colon.

It is found in the cell membrane. The protein resides in the golgi apparatus membrane. Its subcellular location is the synapse. It localises to the perikaryon. The protein localises to the cell projection. It is found in the dendrite. The protein resides in the axon. Its function is as follows. Receptor for Wnt proteins. Functions in the canonical Wnt/beta-catenin signaling pathway. In vitro activates WNT2, WNT10B, WNT5A, but not WNT2B or WNT4 signaling. In neurons, activation by WNT7A promotes formation of synapses. May be involved in transduction and intercellular transmission of polarity information during tissue morphogenesis and/or in differentiated tissues. Plays a role in yolk sac angiogenesis and in placental vascularization. Plays a role in ocular development. The protein is Frizzled-5 (Fzd5) of Mus musculus (Mouse).